We begin with the raw amino-acid sequence, 65 residues long: Large ribosomal subunit protein bL33c (65 aa).

The protein belongs to the bacterial ribosomal protein bL33 family.

Its subcellular location is the plastid. The protein resides in the chloroplast. The protein is Large ribosomal subunit protein bL33c of Chaetosphaeridium globosum (Charophycean green alga).